The primary structure comprises 93 residues: MAEEHVVYIGKKPVMNYVLAVITQFNEGAKEVSIKARGRAISRAVDVAEIVRNRFLKDTVDIKEIKIGTEELPTADGRTTNTSTIEIVLERKV.

Lys11 bears the N6-acetyllysine mark.

The protein belongs to the histone-like Alba family. Acetylated. Acetylation at Lys-11 decreases DNA-binding affinity.

Its subcellular location is the cytoplasm. The protein resides in the chromosome. In terms of biological role, binds double-stranded DNA tightly but without sequence specificity. Involved in DNA compaction. The protein is DNA/RNA-binding protein Alba of Pyrococcus furiosus (strain ATCC 43587 / DSM 3638 / JCM 8422 / Vc1).